We begin with the raw amino-acid sequence, 243 residues long: 5'-methylthioadenosine/S-adenosylhomocysteine nucleosidase (243 aa).

E12 serves as the catalytic Proton acceptor. Substrate is bound by residues G78, M158, and 179–180 (ME). Residue D203 is the Proton donor of the active site.

The protein belongs to the PNP/UDP phosphorylase family. MtnN subfamily.

The enzyme catalyses S-adenosyl-L-homocysteine + H2O = S-(5-deoxy-D-ribos-5-yl)-L-homocysteine + adenine. The catalysed reaction is S-methyl-5'-thioadenosine + H2O = 5-(methylsulfanyl)-D-ribose + adenine. It carries out the reaction 5'-deoxyadenosine + H2O = 5-deoxy-D-ribose + adenine. It participates in amino-acid biosynthesis; L-methionine biosynthesis via salvage pathway; S-methyl-5-thio-alpha-D-ribose 1-phosphate from S-methyl-5'-thioadenosine (hydrolase route): step 1/2. Its function is as follows. Catalyzes the irreversible cleavage of the glycosidic bond in both 5'-methylthioadenosine (MTA) and S-adenosylhomocysteine (SAH/AdoHcy) to adenine and the corresponding thioribose, 5'-methylthioribose and S-ribosylhomocysteine, respectively. Also cleaves 5'-deoxyadenosine, a toxic by-product of radical S-adenosylmethionine (SAM) enzymes, into 5-deoxyribose and adenine. This Colwellia psychrerythraea (strain 34H / ATCC BAA-681) (Vibrio psychroerythus) protein is 5'-methylthioadenosine/S-adenosylhomocysteine nucleosidase.